Reading from the N-terminus, the 185-residue chain is Elongation factor P (185 aa).

It belongs to the elongation factor P family.

The protein resides in the cytoplasm. It functions in the pathway protein biosynthesis; polypeptide chain elongation. Functionally, involved in peptide bond synthesis. Stimulates efficient translation and peptide-bond synthesis on native or reconstituted 70S ribosomes in vitro. Probably functions indirectly by altering the affinity of the ribosome for aminoacyl-tRNA, thus increasing their reactivity as acceptors for peptidyl transferase. The sequence is that of Elongation factor P from Synechococcus sp. (strain JA-2-3B'a(2-13)) (Cyanobacteria bacterium Yellowstone B-Prime).